Consider the following 125-residue polypeptide: Cystatin-like cysteine protease inhibitor EPIC2B (125 aa).

A signal peptide spans 1 to 21; it reads MSFLRPTLALLAVTALVTTSA. The N-linked (GlcNAc...) asparagine glycan is linked to N45. Positions 68-72 match the Secondary area of contact motif; sequence QVVSG.

Belongs to the cystatin family. Interacts with the host papain-like cysteine protease PIP1. Interacts with the host papain-like cysteine protease RCR3. Interacts with the host papain-like cysteine protease C14.

It is found in the secreted. Secreted effector that interacts with and inhibits the pathogenesis-related papain-like cysteine proteases C14, PIP1 and RCR3 of host plants. Inhibition of host proteases by a pathogen extracellular protease inhibitor forms a specific type of defense-counterdefense mechanism between plants and microbial pathogens. This is Cystatin-like cysteine protease inhibitor EPIC2B from Phytophthora infestans (strain T30-4) (Potato late blight agent).